Reading from the N-terminus, the 149-residue chain is Putative oligosaccharyltransferase complex subunit CG9662 (149 aa).

Residues 1–32 (MIETLYNLPFHILVPPNIKVRRFSIPMPSPMA) lie on the Cytoplasmic side of the membrane. A helical membrane pass occupies residues 33–53 (VFSVILFSYFLVTGGIIYDVI). The Extracellular portion of the chain corresponds to 54–83 (VEPPSLGATVDEHGHSRPVAFMPYRVNGQY). Residues 84-104 (IMEGLASSFLFTVGGLGFIIM) traverse the membrane as a helical segment. Residues 105–117 (DQTHTPGKTNLNR) are Cytoplasmic-facing. Residues 118-138 (LLLTAMGFIFILVSFFTTWLF) form a helical membrane-spanning segment. At 139-149 (MRMKLPSYLQP) the chain is on the extracellular side.

Belongs to the OSTC family. Component of the oligosaccharyltransferase (OST) complex.

The protein localises to the membrane. Functionally, subunit of the oligosaccharyl transferase (OST) complex that catalyzes the initial transfer of a defined glycan (Glc(3)Man(9)GlcNAc(2) in eukaryotes) from the lipid carrier dolichol-pyrophosphate to an asparagine residue within an Asn-X-Ser/Thr consensus motif in nascent polypeptide chains, the first step in protein N-glycosylation. N-glycosylation occurs cotranslationally and the complex associates with the Sec61 complex at the channel-forming translocon complex that mediates protein translocation across the endoplasmic reticulum (ER). All subunits are required for a maximal enzyme activity. The polypeptide is Putative oligosaccharyltransferase complex subunit CG9662 (Drosophila melanogaster (Fruit fly)).